A 431-amino-acid polypeptide reads, in one-letter code: Inactive polypeptide N-acetylgalactosaminyltransferase-like protein 5 (431 aa).

At 1–4 (MKSV) the chain is on the cytoplasmic side. Residues 5-27 (IIQGLFCGFLAIGLWASMLLLFL) traverse the membrane as a helical; Signal-anchor for type II membrane protein segment. The Lumenal portion of the chain corresponds to 28–431 (HLEQEDMLEN…TERKRKKNRF (404 aa)). Residue Asn-68 is glycosylated (N-linked (GlcNAc...) asparagine). 2 disulfide bridges follow: Cys-105–Cys-336 and Cys-327–Cys-403. The tract at residues 114-224 (LPTASIIICF…RVWLEPLLHA (111 aa)) is catalytic subdomain A. Residues 282 to 344 (PIRSPAMTGG…PCSRVGYNSK (63 aa)) are catalytic subdomain B. N-linked (GlcNAc...) asparagine glycans are attached at residues Asn-353 and Asn-390.

The protein belongs to the glycosyltransferase 2 family. GalNAc-T subfamily. Mn(2+) serves as cofactor. Expressed in testis. Mainly expressed in the round and elongated spermatids during spermiogenesis, not in the outermost cells of the seminiferous tubules, which contain spermatogonia and somatic Sertoli cells. Present in the juxtanuclear space in the round spermatids, not in the acrosomal vesicles. In the elongating spermatids, localizes strongly in the acroplaxome, the region between the developing acrosome and nucleus. During differentiation, also weakly detected in the transient manchette containing microtubules. In epididymal spermatozoa, weakly detected in the midpiece, but concentrates mainly in the neck region around the head-tail coupling apparatus (at protein level).

It localises to the late endosome membrane. In terms of biological role, probable inactive glycosyltransferase required during spermatid development. May participate in protein loading into the acrosomes and accumulation of ubiquitin-proteasome systems around the head-tail coupling apparatus region. The sequence is that of Inactive polypeptide N-acetylgalactosaminyltransferase-like protein 5 (Galntl5) from Mus musculus (Mouse).